Reading from the N-terminus, the 337-residue chain is Fructose-1,6-bisphosphatase class 1 (337 aa).

Positions 89, 112, 114, and 115 each coordinate Mg(2+). Residues 115–118 (DGSS), asparagine 208, tyrosine 241, and lysine 271 contribute to the substrate site. Glutamate 277 provides a ligand contact to Mg(2+).

This sequence belongs to the FBPase class 1 family. As to quaternary structure, homotetramer. The cofactor is Mg(2+).

The protein localises to the cytoplasm. It carries out the reaction beta-D-fructose 1,6-bisphosphate + H2O = beta-D-fructose 6-phosphate + phosphate. The protein operates within carbohydrate biosynthesis; gluconeogenesis. The protein is Fructose-1,6-bisphosphatase class 1 of Yersinia pestis bv. Antiqua (strain Antiqua).